Here is a 209-residue protein sequence, read N- to C-terminus: Orotate phosphoribosyltransferase (209 aa).

Residues arginine 96, lysine 100, histidine 102, and 122 to 130 (EDLISTGGS) contribute to the 5-phospho-alpha-D-ribose 1-diphosphate site. Serine 126 is an orotate binding site.

It belongs to the purine/pyrimidine phosphoribosyltransferase family. PyrE subfamily. Homodimer. Mg(2+) serves as cofactor.

It carries out the reaction orotidine 5'-phosphate + diphosphate = orotate + 5-phospho-alpha-D-ribose 1-diphosphate. It functions in the pathway pyrimidine metabolism; UMP biosynthesis via de novo pathway; UMP from orotate: step 1/2. Catalyzes the transfer of a ribosyl phosphate group from 5-phosphoribose 1-diphosphate to orotate, leading to the formation of orotidine monophosphate (OMP). The sequence is that of Orotate phosphoribosyltransferase from Streptococcus mutans serotype c (strain ATCC 700610 / UA159).